A 405-amino-acid chain; its full sequence is F-box/kelch-repeat protein At2g43445 (405 aa).

In terms of domain architecture, F-box spans 7 to 53 (NTNSIYIVSELLEEIFLGLPLKSILKFKTVSKQWRSILESNLFVERR). 2 Kelch repeats span residues 146–197 (RDKV…CVNG) and 356–400 (THHD…VVGY).

The polypeptide is F-box/kelch-repeat protein At2g43445 (Arabidopsis thaliana (Mouse-ear cress)).